Reading from the N-terminus, the 163-residue chain is Retinoic acid receptor responder protein 2 (163 aa).

Residues M1–A20 form the signal peptide. 3 disulfides stabilise this stretch: C77–C87, C98–C117, and C101–C135. Positions K158–S163 are excised as a propeptide.

In terms of processing, secreted in an inactive precursor form, prochemerin, which is proteolytically processed by a variety of extracellular proteases to generate forms with differing levels of bioactivity. For example, the removal of six amino acids results in chemerin-157, which exhibits the highest activity, while removal of seven amino acids results in chemerin-156 which has slightly less activity. Some proteases are able to cleave at more than one site and chemerin forms may be sequentially processed by different enzymes to modulate activity levels. The coordinated expression and activity of chemerin-modifying enzymes is essential for regulating its bioactivation, inactivation and, consequently, biological function. Cathepsin G cleaves seven C-terminal amino acids from prochemerin (chemerin-156), elastase is able to cleave six (chemerin-157), eight (chemerin-155) or eleven (chemerin-152), plasmin cleaves five amino acids (chemerin-158), and tryptase cleaves five (chemerin-158) or eight (chemerin-155). Multiple cleavages might be required to fully activate chemerin, with an initial tryptase cleavage resulting in chemerin with low activity (chemerin-158), and a second cleavage by carboxypeptidase N or B producing highly active chemerin (chemerin-157).

The protein localises to the secreted. Adipocyte-secreted protein (adipokine) that regulates adipogenesis, metabolism and inflammation through activation of the chemokine-like receptor 1 (CMKLR1). Also acts as a ligand for CMKLR2. Can also bind to C-C chemokine receptor-like 2 (CCRL2), but with a lower affinity than it does to CMKLR1 or CMKLR2. Positively regulates adipocyte differentiation, modulates the expression of adipocyte genes involved in lipid and glucose metabolism and might play a role in angiogenesis, a process essential for the expansion of white adipose tissue. Also acts as a pro-inflammatory adipokine, causing an increase in secretion of pro-inflammatory and prodiabetic adipokines, which further impair adipose tissue metabolic function and have negative systemic effects including impaired insulin sensitivity, altered glucose and lipid metabolism, and a decrease in vascular function in other tissues. Can have both pro- and anti-inflammatory properties depending on the modality of enzymatic cleavage by different classes of proteases. Acts as a chemotactic factor for leukocyte populations expressing CMKLR1, particularly immature plasmacytoid dendritic cells, but also immature myeloid DCs, macrophages and natural killer cells. Exerts an anti-inflammatory role by preventing TNF/TNFA-induced VCAM1 expression and monocytes adhesion in vascular endothelial cells. The effect is mediated via inhibiting activation of NF-kappa-B and CRK/p38 through stimulation of AKT1/NOS3 signaling and nitric oxide production. Exhibits an antimicrobial function in the skin. This Pongo abelii (Sumatran orangutan) protein is Retinoic acid receptor responder protein 2 (RARRES2).